The primary structure comprises 103 residues: Large ribosomal subunit protein bL21 (103 aa).

It belongs to the bacterial ribosomal protein bL21 family. Part of the 50S ribosomal subunit. Contacts protein L20.

Its function is as follows. This protein binds to 23S rRNA in the presence of protein L20. This chain is Large ribosomal subunit protein bL21, found in Alkaliphilus oremlandii (strain OhILAs) (Clostridium oremlandii (strain OhILAs)).